Here is a 338-residue protein sequence, read N- to C-terminus: Glycerol-3-phosphate dehydrogenase [NAD(P)+] (338 aa).

Residues Ser-14, Tyr-15, His-35, and Lys-109 each coordinate NADPH. The sn-glycerol 3-phosphate site is built by Lys-109, Gly-138, and Thr-140. Ala-142 provides a ligand contact to NADPH. 5 residues coordinate sn-glycerol 3-phosphate: Lys-194, Asp-247, Ser-257, Arg-258, and Asn-259. Lys-194 (proton acceptor) is an active-site residue. Arg-258 is a binding site for NADPH. NADPH contacts are provided by Val-282 and Glu-284.

The protein belongs to the NAD-dependent glycerol-3-phosphate dehydrogenase family.

The protein localises to the cytoplasm. The enzyme catalyses sn-glycerol 3-phosphate + NAD(+) = dihydroxyacetone phosphate + NADH + H(+). It carries out the reaction sn-glycerol 3-phosphate + NADP(+) = dihydroxyacetone phosphate + NADPH + H(+). It participates in membrane lipid metabolism; glycerophospholipid metabolism. Its function is as follows. Catalyzes the reduction of the glycolytic intermediate dihydroxyacetone phosphate (DHAP) to sn-glycerol 3-phosphate (G3P), the key precursor for phospholipid synthesis. The polypeptide is Glycerol-3-phosphate dehydrogenase [NAD(P)+] (Shewanella baltica (strain OS185)).